The primary structure comprises 453 residues: Bifunctional protein GlmU (453 aa).

The interval 1–231 (MERSSLAVIL…EKELTGCNNR (231 aa)) is pyrophosphorylase. UDP-N-acetyl-alpha-D-glucosamine contacts are provided by residues 10-13 (LAAG), Lys-24, Gln-77, 82-83 (GT), 105-107 (YGD), Gly-143, Glu-157, Asn-172, and Asn-229. Position 107 (Asp-107) interacts with Mg(2+). Asn-229 serves as a coordination point for Mg(2+). A linker region spans residues 232-252 (AELAFIERLWQERRRHELMVD). The N-acetyltransferase stretch occupies residues 253-453 (GVSMIAPETV…AQKEAKKKSS (201 aa)). UDP-N-acetyl-alpha-D-glucosamine is bound by residues Arg-318 and Lys-336. Residue His-348 is the Proton acceptor of the active site. Residues Tyr-351 and Asn-362 each coordinate UDP-N-acetyl-alpha-D-glucosamine. Residues Ala-365, 371 to 372 (NY), Ser-390, Ser-408, and Arg-425 each bind acetyl-CoA.

It in the N-terminal section; belongs to the N-acetylglucosamine-1-phosphate uridyltransferase family. The protein in the C-terminal section; belongs to the transferase hexapeptide repeat family. Homotrimer. Requires Mg(2+) as cofactor.

It localises to the cytoplasm. The catalysed reaction is alpha-D-glucosamine 1-phosphate + acetyl-CoA = N-acetyl-alpha-D-glucosamine 1-phosphate + CoA + H(+). It catalyses the reaction N-acetyl-alpha-D-glucosamine 1-phosphate + UTP + H(+) = UDP-N-acetyl-alpha-D-glucosamine + diphosphate. The protein operates within nucleotide-sugar biosynthesis; UDP-N-acetyl-alpha-D-glucosamine biosynthesis; N-acetyl-alpha-D-glucosamine 1-phosphate from alpha-D-glucosamine 6-phosphate (route II): step 2/2. It functions in the pathway nucleotide-sugar biosynthesis; UDP-N-acetyl-alpha-D-glucosamine biosynthesis; UDP-N-acetyl-alpha-D-glucosamine from N-acetyl-alpha-D-glucosamine 1-phosphate: step 1/1. It participates in bacterial outer membrane biogenesis; LPS lipid A biosynthesis. Catalyzes the last two sequential reactions in the de novo biosynthetic pathway for UDP-N-acetylglucosamine (UDP-GlcNAc). The C-terminal domain catalyzes the transfer of acetyl group from acetyl coenzyme A to glucosamine-1-phosphate (GlcN-1-P) to produce N-acetylglucosamine-1-phosphate (GlcNAc-1-P), which is converted into UDP-GlcNAc by the transfer of uridine 5-monophosphate (from uridine 5-triphosphate), a reaction catalyzed by the N-terminal domain. This is Bifunctional protein GlmU from Agrobacterium fabrum (strain C58 / ATCC 33970) (Agrobacterium tumefaciens (strain C58)).